The sequence spans 357 residues: DNA integrity scanning protein DisA (357 aa).

The DAC domain occupies 8–146 (VKSMINILQL…GNLRYTLKDI (139 aa)). ATP is bound by residues G75, L93, and 106–110 (MRHRT).

It belongs to the DisA family. In terms of assembly, homooctamer. It depends on Mg(2+) as a cofactor.

The enzyme catalyses 2 ATP = 3',3'-c-di-AMP + 2 diphosphate. Participates in a DNA-damage check-point that is active prior to asymmetric division when DNA is damaged. DisA forms globular foci that rapidly scan along the chromosomes during sporulation, searching for lesions. When a lesion is present, DisA pauses at the lesion site. This triggers a cellular response that culminates in a temporary block in sporulation initiation. In terms of biological role, also has diadenylate cyclase activity, catalyzing the condensation of 2 ATP molecules into cyclic di-AMP (c-di-AMP). c-di-AMP acts as a signaling molecule that couples DNA integrity with progression of sporulation. The rise in c-di-AMP level generated by DisA while scanning the chromosome, operates as a positive signal that advances sporulation; upon encountering a lesion, the DisA focus arrests at the damaged site and halts c-di-AMP synthesis. This chain is DNA integrity scanning protein DisA, found in Bacillus anthracis (strain CDC 684 / NRRL 3495).